We begin with the raw amino-acid sequence, 522 residues long: Gypsy retrotransposon integrase-like protein 1 (522 aa).

An Integrase catalytic domain is found at 135 to 292 (KVENPWSLVT…TPYFQMFSRN (158 aa)).

This chain is Gypsy retrotransposon integrase-like protein 1 (GIN1), found in Macaca fascicularis (Crab-eating macaque).